A 143-amino-acid chain; its full sequence is Large ribosomal subunit protein uL11 (143 aa).

Belongs to the universal ribosomal protein uL11 family. In terms of assembly, part of the ribosomal stalk of the 50S ribosomal subunit. Interacts with L10 and the large rRNA to form the base of the stalk. L10 forms an elongated spine to which L12 dimers bind in a sequential fashion forming a multimeric L10(L12)X complex. Post-translationally, one or more lysine residues are methylated.

In terms of biological role, forms part of the ribosomal stalk which helps the ribosome interact with GTP-bound translation factors. The protein is Large ribosomal subunit protein uL11 of Aromatoleum aromaticum (strain DSM 19018 / LMG 30748 / EbN1) (Azoarcus sp. (strain EbN1)).